We begin with the raw amino-acid sequence, 491 residues long: E3 ubiquitin-protein ligase Hakai (491 aa).

2 disordered regions span residues 1–20 and 33–61; these read MDHT…LGGL and KQAS…GDEE. Residues 109-149 form an RING-type zinc finger; it reads CDKCGLPIKVYGRMIPCKHVFCYDCAILHEKKGDKMCPGCS. The interval 148–206 is HYB domain; sequence CSDPVQRIEQCTRGSLFMCSIVQGCKRTYLSQRDLQAHINHRHMRAGKPVTRASLENVH. The C2H2-type zinc finger occupies 164-190; sequence FMCSIVQGCKRTYLSQRDLQAHINHRH. 3 positions are modified to phosphoserine: serine 201, serine 285, and serine 290. The segment at 255 to 491 is disordered; the sequence is QPHEDIRAPP…DQTRYRPYYQ (237 aa). 3 stretches are compositionally biased toward pro residues: residues 342 to 359, 372 to 389, and 399 to 423; these read APPP…PHPP, APPP…PPPG, and MNHP…PPHH. Polar residues predominate over residues 427-442; the sequence is NSLPQFTEDQGTLSPP. Pro residues predominate over residues 457 to 478; the sequence is PRGPPPPPRMQGPPSQTPLPGP.

It belongs to the Hakai family. As to quaternary structure, homodimer. Interacts with tyrosine-phosphorylated SRC substrates. Component of the WMM complex, a N6-methyltransferase complex composed of a catalytic subcomplex, named MAC, and of an associated subcomplex, named MACOM. The MAC subcomplex is composed of METTL3 and METTL14. The MACOM subcomplex is composed of WTAP, ZC3H13, CBLL1/HAKAI, VIRMA, and, in some cases of RBM15 (RBM15 or RBM15B). Also a component of a MACOM-like complex, named WTAP complex, composed of WTAP, ZC3H13, CBLL1, VIRMA, RBM15, BCLAF1 and THRAP3. In terms of processing, phosphorylated on tyrosine residues. In terms of tissue distribution, detected in heart, brain, spleen, lung, liver, skeletal muscle, kidney and testis.

It is found in the nucleus speckle. Its subcellular location is the nucleus. The protein resides in the nucleoplasm. The protein localises to the cytoplasm. It catalyses the reaction S-ubiquitinyl-[E2 ubiquitin-conjugating enzyme]-L-cysteine + [acceptor protein]-L-lysine = [E2 ubiquitin-conjugating enzyme]-L-cysteine + N(6)-ubiquitinyl-[acceptor protein]-L-lysine.. It participates in protein modification; protein ubiquitination. Functionally, E3 ubiquitin-protein ligase that mediates ubiquitination of several tyrosine-phosphorylated Src substrates, including CDH1, CTTN and DOK1. Targets CDH1 for endocytosis and degradation. Associated component of the WMM complex, a complex that mediates N6-methyladenosine (m6A) methylation of RNAs, a modification that plays a role in the efficiency of mRNA splicing and RNA processing. Its function in the WMM complex is unknown. This chain is E3 ubiquitin-protein ligase Hakai, found in Mus musculus (Mouse).